A 455-amino-acid polypeptide reads, in one-letter code: uncharacterized protein (455 aa).

The signal sequence occupies residues 1–27 (MSQRQQFQFLLSFLILIFLKFIIQIRC). At 29 to 434 (ESNGVIIIKN…GDDENLINSS (406 aa)) the chain is on the extracellular side. 4 N-linked (GlcNAc...) asparagine glycosylation sites follow: Asn136, Asn148, Asn210, and Asn298. The segment at 383-402 (SSSTTSTTSSSSSSSSSTTT) is disordered. N-linked (GlcNAc...) asparagine glycosylation is found at Asn421 and Asn432. Residues 435–455 (SVIKFSTPIIMIIIILINIKF) traverse the membrane as a helical segment.

The protein resides in the membrane. This is an uncharacterized protein from Dictyostelium discoideum (Social amoeba).